We begin with the raw amino-acid sequence, 496 residues long: Glycerol kinase (496 aa).

Position 11 (threonine 11) interacts with ADP. ATP contacts are provided by threonine 11, threonine 12, and serine 13. Threonine 11 is a sn-glycerol 3-phosphate binding site. Residue arginine 15 participates in ADP binding. Sn-glycerol 3-phosphate contacts are provided by arginine 81, glutamate 82, tyrosine 133, and aspartate 242. Residues arginine 81, glutamate 82, tyrosine 133, aspartate 242, and glutamine 243 each contribute to the glycerol site. Residues threonine 264 and glycine 307 each coordinate ADP. Threonine 264, glycine 307, glutamine 311, and glycine 408 together coordinate ATP. ADP is bound by residues glycine 408 and asparagine 412.

It belongs to the FGGY kinase family.

The enzyme catalyses glycerol + ATP = sn-glycerol 3-phosphate + ADP + H(+). It participates in polyol metabolism; glycerol degradation via glycerol kinase pathway; sn-glycerol 3-phosphate from glycerol: step 1/1. Its activity is regulated as follows. Inhibited by fructose 1,6-bisphosphate (FBP). In terms of biological role, key enzyme in the regulation of glycerol uptake and metabolism. Catalyzes the phosphorylation of glycerol to yield sn-glycerol 3-phosphate. The sequence is that of Glycerol kinase from Aromatoleum aromaticum (strain DSM 19018 / LMG 30748 / EbN1) (Azoarcus sp. (strain EbN1)).